Reading from the N-terminus, the 96-residue chain is Small cysteine and glycine repeat-containing protein 7 (96 aa).

A 14 X 2 AA repeats of CG region spans residues 4–80 (CGCGSCGGCG…TCGSCGCGCG (77 aa)).

Belongs to the KRTAP type 28 family.

Its function is as follows. In the hair cortex, hair keratin intermediate filaments are embedded in an interfilamentous matrix, consisting of hair keratin-associated proteins (KRTAP), which are essential for the formation of a rigid and resistant hair shaft through their extensive disulfide bond cross-linking with abundant cysteine residues of hair keratins. The matrix proteins include the high-sulfur and high-glycine-tyrosine keratins. This is Small cysteine and glycine repeat-containing protein 7 from Homo sapiens (Human).